The sequence spans 423 residues: Dihydroorotase-like protein (423 aa).

Belongs to the metallo-dependent hydrolases superfamily. DHOase family. PyrC' subfamily. As to quaternary structure, heterododecamer of 6 active PyrB subunits and 6 non-catalytic PyrC' subunits.

Non-functional DHOase. This chain is Dihydroorotase-like protein (pyrC'), found in Pseudomonas aeruginosa (strain ATCC 15692 / DSM 22644 / CIP 104116 / JCM 14847 / LMG 12228 / 1C / PRS 101 / PAO1).